The primary structure comprises 271 residues: MATTQQSGFAPAASPLASTIVQTPDDAIVAGFTSIPSQGDNMPAYHARPKQSDGPLPVVIVVQEIFGVHEHIRDICRRLALEGYLAIAPELYFREGDPNDFADIPTLLSGLVAKVPDSQVLADLDHVASWASRNGGDVHRLMITGFCWGGRITWLYAAHNPQLKAAVAWYGKLTGDKSLNSPKQPVDIATDLNAPVLGLYGGLDNSIPQESVETMRQALRAANAKAEIIVYPDAGHAFNADYRPSYHAASAEDGWQRMLEWFKQYGGKKSL.

Active-site residues include Cys-147, Asp-204, and His-236.

This sequence belongs to the dienelactone hydrolase family.

It carries out the reaction 2-(5-oxo-2,5-dihydrofuran-2-ylidene)acetate + H2O = 4-oxohex-2-enedioate + H(+). The chain is Putative carboxymethylenebutenolidase (ysgA) from Escherichia coli O157:H7.